The chain runs to 542 residues: MTQILLPIALLCLFAASTLSNPLLVELPNGELRGRDNGFYYSYESIPYAEPPIDDLCLEEPRPYTERWENTFDATRPPVDCLQWSQLISQPNKLTGSEDCLTVSIYKPKNLTRISFPVVAHIFGGGWSFGAAIDDGVRPFSSSGNVIVVKTTTEWERLGFMSTGDSVIPGNFGLKDQRLAIKWIRNNIARFGGDPHNIILLGFSTGGSSVHLQLMHKEYGQLVKGAISISGTATVPWAVQANARDLAFRYGKLLGCNNPKNSRELKDCLKKTDAEEFVSTLRHLQVFDYVPFGPFGPVVESPEVESPFLTELPLDTIRSGNFAQVPWLASYTPENGIYNAALLLAKDANGKERIEELNTRWNELAPYFLAYPYTLKRSEMNAHSQKLKYQYLGYKNFSVVNYFDVQRLFTNELYKKGIELSLDSHRKHGASPVYAYVYDNPADKSLAQFLAKRSDISLGTGMGDDYYLLMNNPLREPLRADEKIVSWKLVKMVEDFAAHETLVYDDCVFPNNLGKKKFQLVVIGRNYCKQLEVESFARHGVQ.

The signal sequence occupies residues 1–22 (MTQILLPIALLCLFAASTLSNP). Residues cysteine 81 and cysteine 100 are joined by a disulfide bond. Asparagine 110 carries an N-linked (GlcNAc...) asparagine glycan. The active-site Acyl-ester intermediate is the serine 204. A disulfide bridge connects residues cysteine 256 and cysteine 268. Asparagine 396 carries N-linked (GlcNAc...) asparagine glycosylation. Cysteine 507 and cysteine 528 are disulfide-bonded.

This sequence belongs to the type-B carboxylesterase/lipase family. Monomer. As to expression, specifically expressed in the ejaculatory bulbs of male.

The protein localises to the secreted. The catalysed reaction is a carboxylic ester + H2O = an alcohol + a carboxylate + H(+). Its function is as follows. Transferred from the ejaculatory bulbs of males to the female genitals upon copulation, plays an important role in the reproductive biology. The sequence is that of Esterase S (EstS) from Drosophila virilis (Fruit fly).